A 260-amino-acid polypeptide reads, in one-letter code: tRNA (guanine-N(1)-)-methyltransferase (260 aa).

Residues glycine 117 and 137 to 142 (LGDFVL) each bind S-adenosyl-L-methionine.

Belongs to the RNA methyltransferase TrmD family. As to quaternary structure, homodimer.

Its subcellular location is the cytoplasm. The catalysed reaction is guanosine(37) in tRNA + S-adenosyl-L-methionine = N(1)-methylguanosine(37) in tRNA + S-adenosyl-L-homocysteine + H(+). Functionally, specifically methylates guanosine-37 in various tRNAs. The sequence is that of tRNA (guanine-N(1)-)-methyltransferase from Cupriavidus taiwanensis (strain DSM 17343 / BCRC 17206 / CCUG 44338 / CIP 107171 / LMG 19424 / R1) (Ralstonia taiwanensis (strain LMG 19424)).